The chain runs to 750 residues: MIIRSPESEVKIMVDRDPIKTSFEEWARPGHFSRTIAKGPNTTTWIWNLHADAHDFDSHTSDLEEISRKVFSAHFGQLSIIFLWLSGMYFHGARFSNYEAWLSDPTHIAPSAQVVWPIVGQEILNGDVGGGFRGIQITSGFFQIWRASGITSELQLYCTAIGALVFAALMLFAGWFHYHKAAPKLAWFQDVESMLNHHLAGLLGLGSLSWAGHQVHVSLPINQFLDAGVDPKEIPLPHEFILNRDLLAQLYPSFAEGSTPFFTLNWSKYAEFLTFRGGLDPVTGGLWLTDIAHHHLAIAIIFLIAGHMYRTNWGIGHGLKEILEAHKGPFTGEGHKGLYEILTTSWHAQLALNLAMLGSLTIVVAHHMYSMPPYPYLAIDYGTQLSLFTHHMWIGGFLIVGAAAHAAIFMVRDYDPTTRYNDLLDRVLRHRDAIISHLNWACIFLGFHSFGLYIHNDTMSALGRPQDMFSDTAIQLQPIFAQWIQNTHALAPGATAPGATTSTSLTWGGGDLVAVGGKVALLPIPLGTADFLVHHIHAFTIHVTVLILLKGVLFARSSRLIPDKANLGFRFPCDGPGRGGTCQVSAWDHVFLGLFWMYNAISVVIFHFSWKMQSDVWGSISNQGVVTHITGGNFAQSSITINGWLRDFLWAQASQVIQSYGSSLSAYGLFFLGAHFVWAFSLMFLFSGRGYWQELIESIVWAHNKLKVAPATQPRALSIVQGRAVGVTHYLLGGIATTWAFFLARIIAVG.

Transmembrane regions (helical) follow at residues 70–93, 156–179, 195–219, 291–309, 346–369, 385–411, 433–455, and 531–549; these read VFSA…FHGA, LYCT…FHYH, LNHH…HVSL, IAHH…GHMY, WHAQ…HHMY, LSLF…IFMV, AIIS…LYIH, and FLVH…LILL. [4Fe-4S] cluster is bound by residues Cys573 and Cys582. Transmembrane regions (helical) follow at residues 589 to 610 and 664 to 686; these read HVFL…HFSW and LSAY…MFLF. Residue His675 participates in chlorophyll a' binding. Positions 683 and 691 each coordinate chlorophyll a. Residue Trp692 coordinates phylloquinone. A helical membrane pass occupies residues 724-744; the sequence is AVGVTHYLLGGIATTWAFFLA.

Belongs to the PsaA/PsaB family. As to quaternary structure, the PsaA/B heterodimer binds the P700 chlorophyll special pair and subsequent electron acceptors. PSI consists of a core antenna complex that captures photons, and an electron transfer chain that converts photonic excitation into a charge separation. The eukaryotic PSI reaction center is composed of at least 11 subunits. P700 is a chlorophyll a/chlorophyll a' dimer, A0 is one or more chlorophyll a, A1 is one or both phylloquinones and FX is a shared 4Fe-4S iron-sulfur center. serves as cofactor.

The protein localises to the plastid. Its subcellular location is the chloroplast thylakoid membrane. The enzyme catalyses reduced [plastocyanin] + hnu + oxidized [2Fe-2S]-[ferredoxin] = oxidized [plastocyanin] + reduced [2Fe-2S]-[ferredoxin]. PsaA and PsaB bind P700, the primary electron donor of photosystem I (PSI), as well as the electron acceptors A0, A1 and FX. PSI is a plastocyanin-ferredoxin oxidoreductase, converting photonic excitation into a charge separation, which transfers an electron from the donor P700 chlorophyll pair to the spectroscopically characterized acceptors A0, A1, FX, FA and FB in turn. Oxidized P700 is reduced on the lumenal side of the thylakoid membrane by plastocyanin. This Amborella trichopoda protein is Photosystem I P700 chlorophyll a apoprotein A1.